Consider the following 159-residue polypeptide: MGLPEDFITELQIPSYILKILYVIGFFRDIVDALCPYIGLPRFLDHNETSAPDLTRHALSTSASLANELIPVVRFSDLPTDPEDCCTVCLSDFESDDKVRQLPKCGHVFHHYCLDRWIVDYNKMKCPVCRHRFLPKEKYTQSDWGSGSDWFSDEVESTN.

The RING-type; atypical zinc-finger motif lies at 86 to 130; that stretch reads CTVCLSDFESDDKVRQLPKCGHVFHHYCLDRWIVDYNKMKCPVCR.

As to expression, predominantly expressed in stems.

It carries out the reaction S-ubiquitinyl-[E2 ubiquitin-conjugating enzyme]-L-cysteine + [acceptor protein]-L-lysine = [E2 ubiquitin-conjugating enzyme]-L-cysteine + N(6)-ubiquitinyl-[acceptor protein]-L-lysine.. It participates in protein modification; protein ubiquitination. Functionally, probable E3 ubiquitin-protein ligase that may possess E3 ubiquitin ligase activity in vitro. In Arabidopsis thaliana (Mouse-ear cress), this protein is Probable E3 ubiquitin-protein ligase RHA1A.